Reading from the N-terminus, the 468-residue chain is Ribulose bisphosphate carboxylase large chain (468 aa).

Lys-5 carries the N6,N6,N6-trimethyllysine modification. 2 residues coordinate substrate: Asn-114 and Thr-164. Lys-166 serves as the catalytic Proton acceptor. A substrate-binding site is contributed by Lys-168. Positions 192, 194, and 195 each coordinate Mg(2+). Lys-192 carries the N6-carboxylysine modification. The active-site Proton acceptor is His-285. Arg-286, His-318, and Ser-370 together coordinate substrate.

The protein belongs to the RuBisCO large chain family. Type I subfamily. In terms of assembly, heterohexadecamer of 8 large chains and 8 small chains; disulfide-linked. The disulfide link is formed within the large subunit homodimers. It depends on Mg(2+) as a cofactor. Post-translationally, the disulfide bond which can form in the large chain dimeric partners within the hexadecamer appears to be associated with oxidative stress and protein turnover.

The protein resides in the plastid. It is found in the chloroplast. The enzyme catalyses 2 (2R)-3-phosphoglycerate + 2 H(+) = D-ribulose 1,5-bisphosphate + CO2 + H2O. It catalyses the reaction D-ribulose 1,5-bisphosphate + O2 = 2-phosphoglycolate + (2R)-3-phosphoglycerate + 2 H(+). Functionally, ruBisCO catalyzes two reactions: the carboxylation of D-ribulose 1,5-bisphosphate, the primary event in carbon dioxide fixation, as well as the oxidative fragmentation of the pentose substrate in the photorespiration process. Both reactions occur simultaneously and in competition at the same active site. The sequence is that of Ribulose bisphosphate carboxylase large chain from Anthocercis viscosa (Sticky tailflower).